The chain runs to 188 residues: Ribosome maturation factor RimM (188 aa).

The PRC barrel domain occupies 103–177; that stretch reads EEGWYYADLI…RVVIDPPAGT (75 aa).

It belongs to the RimM family. In terms of assembly, binds ribosomal protein uS19.

The protein resides in the cytoplasm. An accessory protein needed during the final step in the assembly of 30S ribosomal subunit, possibly for assembly of the head region. Essential for efficient processing of 16S rRNA. May be needed both before and after RbfA during the maturation of 16S rRNA. It has affinity for free ribosomal 30S subunits but not for 70S ribosomes. The polypeptide is Ribosome maturation factor RimM (Parvibaculum lavamentivorans (strain DS-1 / DSM 13023 / NCIMB 13966)).